The chain runs to 125 residues: Snaclec B6 (125 aa).

3 disulfides stabilise this stretch: C2–C13, C30–C119, and C96–C111. One can recognise a C-type lectin domain in the interval 9-120 (HEGHCYKVFK…CNISQYFVCQ (112 aa)). N95 carries N-linked (GlcNAc...) asparagine glycosylation. N112 carries an N-linked (GlcNAc...) asparagine glycan.

Belongs to the snaclec family. As to quaternary structure, heterodimer; disulfide-linked. In terms of tissue distribution, expressed by the venom gland.

It localises to the secreted. Its function is as follows. Interferes with one step of hemostasis (modulation of platelet aggregation, or coagulation cascade, for example). The protein is Snaclec B6 of Macrovipera lebetinus (Levantine viper).